Here is a 714-residue protein sequence, read N- to C-terminus: Polyribonucleotide nucleotidyltransferase (714 aa).

Asp-484 and Asp-490 together coordinate Mg(2+). Residues 551–610 (PRIMVINIAPEKVREVIGPGGKVINKIIDETGVKIDTEDDGKITVAGENTESAQRAIDMI) enclose the KH domain. One can recognise an S1 motif domain in the interval 620-688 (GEKYLGRVTK…DQGKMTLSRK (69 aa)). Residues 685–714 (LSRKALLPKPERKEKKNFDKKSEDQNSEDK) form a disordered region. Residues 693 to 714 (KPERKEKKNFDKKSEDQNSEDK) show a composition bias toward basic and acidic residues.

Belongs to the polyribonucleotide nucleotidyltransferase family. It depends on Mg(2+) as a cofactor.

It localises to the cytoplasm. It catalyses the reaction RNA(n+1) + phosphate = RNA(n) + a ribonucleoside 5'-diphosphate. Involved in mRNA degradation. Catalyzes the phosphorolysis of single-stranded polyribonucleotides processively in the 3'- to 5'-direction. The sequence is that of Polyribonucleotide nucleotidyltransferase from Finegoldia magna (strain ATCC 29328 / DSM 20472 / WAL 2508) (Peptostreptococcus magnus).